A 327-amino-acid chain; its full sequence is Vacuolar protein sorting-associated protein 26A (327 aa).

Positions 306–327 are disordered; sequence RTNFHQRFESPESQASAEQPEM. S315 bears the Phosphoserine mark. Polar residues predominate over residues 316–327; the sequence is PESQASAEQPEM.

It belongs to the VPS26 family. Component of the heterotrimeric retromer cargo-selective complex (CSC), also described as vacuolar protein sorting subcomplex (VPS), formed by VPS26 (VPS26A or VPS26B), VPS29 and VPS35. The CSC has a highly elongated structure with VPS26 and VPS29 binding independently at opposite distal ends of VPS35 as central platform. The CSC is believed to associate with variable sorting nexins to form functionally distinct retromer complex variants. The originally described retromer complex (also called SNX-BAR retromer) is a pentamer containing the CSC and a heterodimeric membrane-deforming subcomplex formed between SNX1 or SNX2 and SNX5 or SNX6 (also called SNX-BAR subcomplex); the respective CSC and SNX-BAR subcomplexes associate with low affinity. The CSC associates with SNX3 to form a SNX3-retromer complex. The CSC associates with SNX27, the WASH complex and the SNX-BAR subcomplex to form the SNX27-retromer complex. Interacts with VPS29, VPS35, SNX27, SNX1, SNX2, SNX5, SNX6, SNX3, RAB7A, ECPAS, EHD1, WASHC5, SORL1.

It is found in the cytoplasm. It localises to the endosome membrane. Its subcellular location is the early endosome. Functionally, acts as a component of the retromer cargo-selective complex (CSC). The CSC is believed to be the core functional component of retromer or respective retromer complex variants acting to prevent missorting of selected transmembrane cargo proteins into the lysosomal degradation pathway. The recruitment of the CSC to the endosomal membrane involves RAB7A and SNX3. The SNX-BAR retromer mediates retrograde transport of cargo proteins from endosomes to the trans-Golgi network (TGN) and is involved in endosome-to-plasma membrane transport for cargo protein recycling. The SNX3-retromer mediates the retrograde endosome-to-TGN transport of WLS distinct from the SNX-BAR retromer pathway. The SNX27-retromer is believed to be involved in endosome-to-plasma membrane trafficking and recycling of a broad spectrum of cargo proteins. The CSC complex seems to act as recruitment hub for other proteins, such as the WASH complex and TBC1D5. Required for retrograde transport of lysosomal enzyme receptor IGF2R. Required to regulate transcytosis of the polymeric immunoglobulin receptor (pIgR-pIgA). Required for the endosomal localization of WASHC2 (indicative for the WASH complex). Required for the endosomal localization of TBC1D5. Mediates retromer cargo recognition of SORL1 and is involved in trafficking of SORL1 implicated in sorting and processing of APP. Involved in retromer-independent lysosomal sorting of F2R. Involved in recycling of ADRB2. Acts redundantly with VSP26B in SNX-27 mediated endocytic recycling of SLC2A1/GLUT1. Enhances the affinity of SNX27 for PDZ-binding motifs in cargo proteins. The polypeptide is Vacuolar protein sorting-associated protein 26A (VPS26A) (Bos taurus (Bovine)).